A 509-amino-acid chain; its full sequence is Src substrate cortactin (509 aa).

Residues Met1–Phe28 form a disordered region. The segment covering Gly17–Phe28 has biased composition (acidic residues). Cortactin repeat units follow at residues Ala80–Asp116, Ser117–Asp153, Tyr154–Asp190, Tyr191–Asp227, and Tyr228–Asp264. Residues Lys87 and Lys107 each carry the N6-acetyllysine modification. Ser113 carries the phosphoserine modification. Omega-N-methylarginine is present on Arg119. Residue Lys124 is modified to N6-acetyllysine. Lys144 is modified (N6-acetyllysine; alternate). A Glycyl lysine isopeptide (Lys-Gly) (interchain with G-Cter in SUMO1); alternate cross-link involves residue Lys144. A Glycyl lysine isopeptide (Lys-Gly) (interchain with G-Cter in SUMO2); alternate cross-link involves residue Lys144. A Phosphoserine modification is found at Ser150. Residues Lys152, Lys161, and Lys171 each carry the N6-acetyllysine modification. The residue at position 181 (Lys181) is an N6-acetyllysine; alternate. Residue Lys181 forms a Glycyl lysine isopeptide (Lys-Gly) (interchain with G-Cter in SUMO1); alternate linkage. A Glycyl lysine isopeptide (Lys-Gly) (interchain with G-Cter in SUMO2); alternate cross-link involves residue Lys181. An N6-acetyllysine mark is found at Lys193 and Lys198. Lys218 participates in a covalent cross-link: Glycyl lysine isopeptide (Lys-Gly) (interchain with G-Cter in SUMO1). An N6-acetyllysine modification is found at Lys235. Ser261 is modified (phosphoserine). The stretch at Tyr265–Phe287 is one Cortactin 6; truncated repeat. An N6-acetyllysine mark is found at Lys267, Lys272, Lys277, and Lys309. Residues Ser311 to Thr364 adopt a coiled-coil conformation. The disordered stretch occupies residues Glu318–Ala409. A compositionally biased stretch (basic and acidic residues) spans Leu320–Arg359. Thr364 is subject to Phosphothreonine. Residues Ser368, Ser370, Ser380, and Ser381 each carry the phosphoserine modification. Tyr384 carries the phosphotyrosine; by FAK1 modification. The segment covering Glu393–Ser406 has biased composition (low complexity). A Phosphotyrosine modification is found at Tyr405. Residue Ser406 is modified to Phosphoserine. Tyr429 and Tyr445 each carry phosphotyrosine; by FAK1. Phosphotyrosine; by SRC occurs at positions 445 and 448. An SH3 domain is found at Asp451–Gln509.

In terms of assembly, part of a complex composed of NEDD9, AURKA and CTTN; within the complex NEDD9 acts as a scaffold protein and is required for complex formation. Interacts (via N-terminus) with NEDD9. Identified in a complex containing FGFR4, NCAM1, CDH2, PLCG1, FRS2, SRC, SHC1, GAP43 and CTTN. Forms a complex with ABL1 and MYLK. Interacts with SHANK2 and SHANK3 (via its SH3 domain). Interacts with PLXDC2 and SRCIN1. Interacts with SAMSN1 (via SH3 domain). Interacts (via SH3 domain) with ASAP1 (via Pro-rich region). Interacts with FER. Interacts with FGD1. Interacts with ABL2. Interacts with CTTNBP2NL; this interaction may target CTTN to stress fibers. Interacts with CTTNBP2; this interaction may target CTTN at the cell cortex or dendritic spines. Interacts (via SH3 domain) with DNM2. Interacts with ACTN1. Interacts with KCNA2 (via non-phosphorylated C-terminus). Interacts with PTK2/FAK1. Interacts with KCNH1. Interacts (via SH3 domain) with DIP2A (via N-terminus); the interaction enhances CTTN acetylation and is required for proper synaptic transmission. Interacts with XIRP1 (via N-terminus); the interaction promotes CTTN localization to intercalated disks in cardiomyocytes. In terms of processing, acetylated. Post-translationally, phosphorylated by FER. Phosphorylated in response to FGR activation. Phosphorylation by SRC promotes MYLK binding. Tyrosine phosphorylation in transformed cells may contribute to cellular growth regulation and transformation. Phosphorylated by PKN2 at both serine and threonine residues in a GTP-bound Rac1-dependent manner in hyaluronan-induced astrocytes and hence down-regulated CTTN ability to associate with filamentous actin. Phosphorylated on tyrosine residues in response to CHRM1 activation. Phosphorylated by PTK2/FAK1 in response to cell adhesion. As to expression, detected in liver (at protein level).

The protein localises to the cytoplasm. Its subcellular location is the cytoskeleton. It localises to the cell projection. It is found in the lamellipodium. The protein resides in the ruffle. The protein localises to the dendrite. Its subcellular location is the cell membrane. It localises to the podosome. It is found in the cell junction. The protein resides in the focal adhesion. The protein localises to the membrane. Its subcellular location is the clathrin-coated pit. It localises to the dendritic spine. It is found in the cell cortex. The protein resides in the endoplasmic reticulum. Contributes to the organization of the actin cytoskeleton and cell shape. Plays a role in the formation of lamellipodia and in cell migration. Plays a role in the regulation of neuron morphology, axon growth and formation of neuronal growth cones. Through its interaction with CTTNBP2, involved in the regulation of neuronal spine density. Plays a role in focal adhesion assembly and turnover. In complex with ABL1 and MYLK regulates cortical actin-based cytoskeletal rearrangement critical to sphingosine 1-phosphate (S1P)-mediated endothelial cell (EC) barrier enhancement. Plays a role in intracellular protein transport and endocytosis, and in modulating the levels of potassium channels present at the cell membrane. Plays a role in receptor-mediated endocytosis via clathrin-coated pits. Required for stabilization of KCNH1 channels at the cell membrane. This is Src substrate cortactin from Rattus norvegicus (Rat).